The chain runs to 216 residues: Probable chemoreceptor glutamine deamidase CheD (216 aa).

This sequence belongs to the CheD family.

It carries out the reaction L-glutaminyl-[protein] + H2O = L-glutamyl-[protein] + NH4(+). Its function is as follows. Probably deamidates glutamine residues to glutamate on methyl-accepting chemotaxis receptors (MCPs), playing an important role in chemotaxis. The protein is Probable chemoreceptor glutamine deamidase CheD of Halorhodospira halophila (strain DSM 244 / SL1) (Ectothiorhodospira halophila (strain DSM 244 / SL1)).